We begin with the raw amino-acid sequence, 332 residues long: L-lactate dehydrogenase A chain (332 aa).

N-acetylalanine is present on A2. Residue K5 is modified to N6-acetyllysine; alternate. K5 bears the N6-succinyllysine; alternate mark. K14 is subject to N6-acetyllysine. 29–57 lines the NAD(+) pocket; it reads GAVGMACAISILMKDLADELALVDVMEDK. Position 57 is an N6-acetyllysine; alternate (K57). K57 is covalently cross-linked (Glycyl lysine isopeptide (Lys-Gly) (interchain with G-Cter in SUMO2); alternate). K81 carries the N6-acetyllysine modification. R99 lines the NAD(+) pocket. R106 provides a ligand contact to substrate. K118 is modified (N6-acetyllysine; alternate). K118 is subject to N6-succinyllysine; alternate. At K126 the chain carries N6-acetyllysine. N138 contributes to the NAD(+) binding site. N138 and R169 together coordinate substrate. The Proton acceptor role is filled by H193. K224 and K232 each carry N6-acetyllysine. Position 239 is a phosphotyrosine (Y239). K243 is subject to N6-acetyllysine. T248 is a substrate binding site. T309 is modified (phosphothreonine). At S310 the chain carries Phosphoserine. K318 carries the post-translational modification N6-acetyllysine; alternate. An N6-succinyllysine; alternate modification is found at K318. Residue T322 is modified to Phosphothreonine.

Belongs to the LDH/MDH superfamily. LDH family. In terms of assembly, homotetramer. Interacts with PTEN upstream reading frame protein MP31. ISGylated.

Its subcellular location is the cytoplasm. The enzyme catalyses (S)-lactate + NAD(+) = pyruvate + NADH + H(+). The protein operates within fermentation; pyruvate fermentation to lactate; (S)-lactate from pyruvate: step 1/1. Functionally, interconverts simultaneously and stereospecifically pyruvate and lactate with concomitant interconversion of NADH and NAD(+). This chain is L-lactate dehydrogenase A chain (LDHA), found in Oryctolagus cuniculus (Rabbit).